Reading from the N-terminus, the 615-residue chain is DNA mismatch repair protein MutL (615 aa).

The segment at 362 to 397 (HFAEPAVREPVAPRYSPAPASGSRPAASWPNAQPGY) is disordered. Positions 373 to 391 (APRYSPAPASGSRPAASWP) are enriched in low complexity.

The protein belongs to the DNA mismatch repair MutL/HexB family.

Its function is as follows. This protein is involved in the repair of mismatches in DNA. It is required for dam-dependent methyl-directed DNA mismatch repair. May act as a 'molecular matchmaker', a protein that promotes the formation of a stable complex between two or more DNA-binding proteins in an ATP-dependent manner without itself being part of a final effector complex. This Escherichia coli O45:K1 (strain S88 / ExPEC) protein is DNA mismatch repair protein MutL.